The following is a 480-amino-acid chain: UDP-N-acetylmuramate--L-alanine ligase (480 aa).

125 to 131 (GTHGKTT) is an ATP binding site.

The protein belongs to the MurCDEF family.

Its subcellular location is the cytoplasm. The catalysed reaction is UDP-N-acetyl-alpha-D-muramate + L-alanine + ATP = UDP-N-acetyl-alpha-D-muramoyl-L-alanine + ADP + phosphate + H(+). It participates in cell wall biogenesis; peptidoglycan biosynthesis. Cell wall formation. The polypeptide is UDP-N-acetylmuramate--L-alanine ligase (Ectopseudomonas mendocina (strain ymp) (Pseudomonas mendocina)).